We begin with the raw amino-acid sequence, 212 residues long: Ras-related protein Rab-15 (212 aa).

Serine 17, glycine 18, valine 19, glycine 20, lysine 21, threonine 22, cysteine 23, serine 35, serine 39, and threonine 40 together coordinate GTP. Threonine 22 lines the Mg(2+) pocket. 2 consecutive short sequence motifs (switch) follow at residues 31 to 45 (NEFH…GVDF) and 63 to 80 (DTAG…YYRR). The Mg(2+) site is built by threonine 40 and aspartate 63. Glycine 66, asparagine 121, lysine 122, aspartate 124, serine 151, and alanine 152 together coordinate GTP. Residues cysteine 210 and cysteine 212 are each lipidated (S-geranylgeranyl cysteine). Cysteine 212 carries the post-translational modification Cysteine methyl ester.

It belongs to the small GTPase superfamily. Rab family. As to quaternary structure, the GTP bound form of RAB15 interacts with REP15. Interacts (GTP-bound form) with MICAL1, MICAL3, MICALCL, EHBP1 and EHBP1L1. Mg(2+) serves as cofactor. As to expression, expressed predominantly in neural tissues.

The protein localises to the cell membrane. It carries out the reaction GTP + H2O = GDP + phosphate + H(+). Its activity is regulated as follows. Regulated by guanine nucleotide exchange factors (GEFs) which promote the exchange of bound GDP for free GTP. Regulated by GTPase activating proteins (GAPs) which increase the GTP hydrolysis activity. Inhibited by GDP dissociation inhibitors (GDIs). Functionally, the small GTPases Rab are key regulators of intracellular membrane trafficking, from the formation of transport vesicles to their fusion with membranes. Rabs cycle between an inactive GDP-bound form and an active GTP-bound form that is able to recruit to membranes different sets of downstream effectors directly responsible for vesicle formation, movement, tethering and fusion. RAB15 may act in concert with RAB3A in regulating aspects of synaptic vesicle membrane flow within the nerve terminal. The polypeptide is Ras-related protein Rab-15 (Rattus norvegicus (Rat)).